A 722-amino-acid polypeptide reads, in one-letter code: Probable acyl-activating enzyme 16, chloroplastic (722 aa).

Residues 1–47 (MASTSLGASILVSHCSSAPEFQVSGMRLVFGYKAFGCRTSRRGFRVR) constitute a chloroplast transit peptide.

It belongs to the ATP-dependent AMP-binding enzyme family.

The protein localises to the plastid. It is found in the chloroplast. Its function is as follows. May be involved in the activation of fatty acids to acyl-carrier-protein. The chain is Probable acyl-activating enzyme 16, chloroplastic (AAE16) from Arabidopsis thaliana (Mouse-ear cress).